A 129-amino-acid polypeptide reads, in one-letter code: AGPFRFPRCRKEFQQAQHLRACQQWLHKQAMQSGSGPQPQGPQQRPPLLQQCCNELHQEEPLCVCPTLKGASKAVKQQIRQQGQQQGQQGQQLQHEISRIYQTATHLPRVCNIPRVSICPFQKTMPGPS.

The disordered stretch occupies residues 28 to 47 (KQAMQSGSGPQPQGPQQRPP). Positions 32-47 (QSGSGPQPQGPQQRPP) are enriched in low complexity.

The protein belongs to the 2S seed storage albumins family. The mature protein consists of a small and a large chain linked by two disulfide bonds.

Functionally, this is a 2S seed storage protein. The sequence is that of Allergen Bra j 1-E from Brassica juncea (Indian mustard).